The sequence spans 117 residues: Large ribosomal subunit protein bL20 (117 aa).

It belongs to the bacterial ribosomal protein bL20 family.

Its function is as follows. Binds directly to 23S ribosomal RNA and is necessary for the in vitro assembly process of the 50S ribosomal subunit. It is not involved in the protein synthesizing functions of that subunit. The chain is Large ribosomal subunit protein bL20 from Natranaerobius thermophilus (strain ATCC BAA-1301 / DSM 18059 / JW/NM-WN-LF).